A 955-amino-acid polypeptide reads, in one-letter code: 2-oxoglutarate dehydrogenase E1 component (955 aa).

This sequence belongs to the alpha-ketoglutarate dehydrogenase family. As to quaternary structure, homodimer. Part of the 2-oxoglutarate dehydrogenase (OGDH) complex composed of E1 (2-oxoglutarate dehydrogenase), E2 (dihydrolipoamide succinyltransferase) and E3 (dihydrolipoamide dehydrogenase); the complex contains multiple copies of the three enzymatic components (E1, E2 and E3). Requires thiamine diphosphate as cofactor.

It catalyses the reaction N(6)-[(R)-lipoyl]-L-lysyl-[protein] + 2-oxoglutarate + H(+) = N(6)-[(R)-S(8)-succinyldihydrolipoyl]-L-lysyl-[protein] + CO2. Its function is as follows. E1 component of the 2-oxoglutarate dehydrogenase (OGDH) complex which catalyzes the decarboxylation of 2-oxoglutarate, the first step in the conversion of 2-oxoglutarate to succinyl-CoA and CO(2). The protein is 2-oxoglutarate dehydrogenase E1 component of Bacillus cereus (strain B4264).